A 422-amino-acid polypeptide reads, in one-letter code: MWELLAKGDPEVYEIVMKELGRQEEGLELIASENFVSPAVMEAMGSTLTNKYAEGYPRRRYYGGCKFVDEAEQLARERVKKLFNCKYANVQPHSGSQANMAAYLAVANPGDTIMGMSLSHGGHLTHGSPVNFSGKLFNIVSYGVDLETEVLDYDEIERLALEHKPKIIIAGGSAYSRIIDFKRFREIADKVGAYLIVDMAHFAGLVAAGLYPNPVDHAHIVTSTTHKTLRGPRGGLILTNDEELYKAINKAVFPGIQGGPLMHVIAAKAVAFGEALKDEFKEYQMRIITNAKALAKELENLGLRIVSGGTDTHLFLVDLNPKNVTGKAAEKALESADITVNKNTIPKETRSPFVTSGIRIGTPAVTTRGMGESEMKVIAELIVKVIDNIQDEKGTIPEEIREEVKKAVHELTEKFPLYKDLT.

(6S)-5,6,7,8-tetrahydrofolate-binding positions include leucine 118 and 122–124; that span reads GHL. Lysine 227 carries the post-translational modification N6-(pyridoxal phosphate)lysine. (6S)-5,6,7,8-tetrahydrofolate is bound by residues glutamate 243 and 351–353; that span reads SPF.

The protein belongs to the SHMT family. As to quaternary structure, homodimer. It depends on pyridoxal 5'-phosphate as a cofactor.

It localises to the cytoplasm. The catalysed reaction is (6R)-5,10-methylene-5,6,7,8-tetrahydrofolate + glycine + H2O = (6S)-5,6,7,8-tetrahydrofolate + L-serine. The protein operates within one-carbon metabolism; tetrahydrofolate interconversion. Its pathway is amino-acid biosynthesis; glycine biosynthesis; glycine from L-serine: step 1/1. In terms of biological role, catalyzes the reversible interconversion of serine and glycine with tetrahydrofolate (THF) serving as the one-carbon carrier. This reaction serves as the major source of one-carbon groups required for the biosynthesis of purines, thymidylate, methionine, and other important biomolecules. Also exhibits THF-independent aldolase activity toward beta-hydroxyamino acids, producing glycine and aldehydes, via a retro-aldol mechanism. The sequence is that of Serine hydroxymethyltransferase from Kosmotoga olearia (strain ATCC BAA-1733 / DSM 21960 / TBF 19.5.1).